Here is a 256-residue protein sequence, read N- to C-terminus: 5'-nucleotidase SurE (256 aa).

Residues aspartate 9, aspartate 10, serine 40, and asparagine 94 each contribute to the a divalent metal cation site.

It belongs to the SurE nucleotidase family. It depends on a divalent metal cation as a cofactor.

It localises to the cytoplasm. It catalyses the reaction a ribonucleoside 5'-phosphate + H2O = a ribonucleoside + phosphate. Nucleotidase that shows phosphatase activity on nucleoside 5'-monophosphates. This is 5'-nucleotidase SurE from Campylobacter fetus subsp. fetus (strain 82-40).